Here is a 425-residue protein sequence, read N- to C-terminus: Serine--tRNA ligase (425 aa).

231–233 (TAE) serves as a coordination point for L-serine. 262 to 264 (RSE) is an ATP binding site. L-serine is bound at residue Glu285. Residue 349–352 (EISS) participates in ATP binding. Ser385 contributes to the L-serine binding site.

Belongs to the class-II aminoacyl-tRNA synthetase family. Type-1 seryl-tRNA synthetase subfamily. As to quaternary structure, homodimer. The tRNA molecule binds across the dimer.

It localises to the cytoplasm. The enzyme catalyses tRNA(Ser) + L-serine + ATP = L-seryl-tRNA(Ser) + AMP + diphosphate + H(+). The catalysed reaction is tRNA(Sec) + L-serine + ATP = L-seryl-tRNA(Sec) + AMP + diphosphate + H(+). The protein operates within aminoacyl-tRNA biosynthesis; selenocysteinyl-tRNA(Sec) biosynthesis; L-seryl-tRNA(Sec) from L-serine and tRNA(Sec): step 1/1. In terms of biological role, catalyzes the attachment of serine to tRNA(Ser). Is also able to aminoacylate tRNA(Sec) with serine, to form the misacylated tRNA L-seryl-tRNA(Sec), which will be further converted into selenocysteinyl-tRNA(Sec). This chain is Serine--tRNA ligase, found in Desulfosudis oleivorans (strain DSM 6200 / JCM 39069 / Hxd3) (Desulfococcus oleovorans).